A 493-amino-acid chain; its full sequence is Glutamyl-tRNA(Gln) amidotransferase subunit A (493 aa).

Residues K79 and S159 each act as charge relay system in the active site. The active-site Acyl-ester intermediate is the S183.

It belongs to the amidase family. GatA subfamily. Heterotrimer of A, B and C subunits.

The enzyme catalyses L-glutamyl-tRNA(Gln) + L-glutamine + ATP + H2O = L-glutaminyl-tRNA(Gln) + L-glutamate + ADP + phosphate + H(+). In terms of biological role, allows the formation of correctly charged Gln-tRNA(Gln) through the transamidation of misacylated Glu-tRNA(Gln) in organisms which lack glutaminyl-tRNA synthetase. The reaction takes place in the presence of glutamine and ATP through an activated gamma-phospho-Glu-tRNA(Gln). The chain is Glutamyl-tRNA(Gln) amidotransferase subunit A from Rhizobium etli (strain ATCC 51251 / DSM 11541 / JCM 21823 / NBRC 15573 / CFN 42).